A 97-amino-acid chain; its full sequence is uncharacterized protein (97 aa).

It belongs to the mycobacterial PE family.

Part of the ESX-1 / type VII specialized secretion system (T7SS), which exports several proteins including EsxA and EsxB. Plays a role in DNA conjugation, in at least a donor strain. This is an uncharacterized protein from Mycolicibacterium smegmatis (strain ATCC 700084 / mc(2)155) (Mycobacterium smegmatis).